Reading from the N-terminus, the 298-residue chain is Probable endonuclease 4 (298 aa).

Zn(2+)-binding residues include His-69, His-111, Glu-146, Asp-180, His-183, His-215, Asp-228, His-230, and Glu-260.

It belongs to the AP endonuclease 2 family. Requires Zn(2+) as cofactor.

It catalyses the reaction Endonucleolytic cleavage to 5'-phosphooligonucleotide end-products.. Endonuclease IV plays a role in DNA repair. It cleaves phosphodiester bonds at apurinic or apyrimidinic (AP) sites, generating a 3'-hydroxyl group and a 5'-terminal sugar phosphate. The sequence is that of Probable endonuclease 4 from Bacillus cereus (strain G9842).